The sequence spans 168 residues: MSNPMRPVRSILLAIFTGCAGLIGYALYLQLVENLLPCPLCVVQRMAYWLIGLTALAGFFHTPETTGRRIYAGLMAVFAFTGGLVALRQAWLVRYPEAFECGISPEEAFLNALPLARWWPVMFEANGDCADVTWKFASLTLPDWSAIFFMILAALSIYVLLVRENQRE.

The Cytoplasmic portion of the chain corresponds to 1–11 (MSNPMRPVRSI). Residues 12–28 (LLAIFTGCAGLIGYALY) form a helical membrane-spanning segment. The Periplasmic portion of the chain corresponds to 29 to 46 (LQLVENLLPCPLCVVQRM). A disulfide bond links Cys-38 and Cys-41. The helical transmembrane segment at 47-63 (AYWLIGLTALAGFFHTP) threads the bilayer. Over 64 to 69 (ETTGRR) the chain is Cytoplasmic. Residues 70 to 87 (IYAGLMAVFAFTGGLVAL) traverse the membrane as a helical segment. Over 88–143 (RQAWLVRYPEAFECGISPEEAFLNALPLARWWPVMFEANGDCADVTWKFASLTLPD) the chain is Periplasmic. An intrachain disulfide couples Cys-101 to Cys-129. The helical transmembrane segment at 144-162 (WSAIFFMILAALSIYVLLV) threads the bilayer. The Cytoplasmic segment spans residues 163 to 168 (RENQRE).

It belongs to the DsbB family.

It is found in the cell inner membrane. Functionally, required for disulfide bond formation in some periplasmic proteins. Acts by oxidizing the DsbA protein. The chain is Disulfide bond formation protein B from Nitrosospira multiformis (strain ATCC 25196 / NCIMB 11849 / C 71).